We begin with the raw amino-acid sequence, 85 residues long: Large ribosomal subunit protein bL27 (85 aa).

The interval 1–20 (MAHKKAAGSSRNGRDSNPKM) is disordered.

It belongs to the bacterial ribosomal protein bL27 family.

The polypeptide is Large ribosomal subunit protein bL27 (Psychrobacter arcticus (strain DSM 17307 / VKM B-2377 / 273-4)).